The chain runs to 231 residues: Adenosylcobinamide-GDP ribazoletransferase (231 aa).

A run of 6 helical transmembrane segments spans residues 29-49 (ICAYFTFVGYLAGVFYFSMKL), 53-73 (NFLWTLLSVALGFYLFDLFHF), 101-121 (IGPFAFFYAALYIVAYLYAFL), 126-146 (IDLIYVAVLGRFSMNILLHFG), 167-187 (LISLVFTIPLVYFPLNYIISL), and 211-231 (DVLGATCMFSQLSIMVALSLI).

The protein belongs to the CobS family. Mg(2+) is required as a cofactor.

It localises to the cell inner membrane. The catalysed reaction is alpha-ribazole + adenosylcob(III)inamide-GDP = adenosylcob(III)alamin + GMP + H(+). It catalyses the reaction alpha-ribazole 5'-phosphate + adenosylcob(III)inamide-GDP = adenosylcob(III)alamin 5'-phosphate + GMP + H(+). The protein operates within cofactor biosynthesis; adenosylcobalamin biosynthesis; adenosylcobalamin from cob(II)yrinate a,c-diamide: step 7/7. Joins adenosylcobinamide-GDP and alpha-ribazole to generate adenosylcobalamin (Ado-cobalamin). Also synthesizes adenosylcobalamin 5'-phosphate from adenosylcobinamide-GDP and alpha-ribazole 5'-phosphate. The sequence is that of Adenosylcobinamide-GDP ribazoletransferase from Kosmotoga olearia (strain ATCC BAA-1733 / DSM 21960 / TBF 19.5.1).